Here is a 250-residue protein sequence, read N- to C-terminus: Ubiquinone/menaquinone biosynthesis C-methyltransferase UbiE (250 aa).

S-adenosyl-L-methionine-binding positions include Thr-74, Asp-94, Asp-122 to Ala-123, and Ser-139.

Belongs to the class I-like SAM-binding methyltransferase superfamily. MenG/UbiE family.

The catalysed reaction is a 2-demethylmenaquinol + S-adenosyl-L-methionine = a menaquinol + S-adenosyl-L-homocysteine + H(+). It carries out the reaction a 2-methoxy-6-(all-trans-polyprenyl)benzene-1,4-diol + S-adenosyl-L-methionine = a 5-methoxy-2-methyl-3-(all-trans-polyprenyl)benzene-1,4-diol + S-adenosyl-L-homocysteine + H(+). It functions in the pathway quinol/quinone metabolism; menaquinone biosynthesis; menaquinol from 1,4-dihydroxy-2-naphthoate: step 2/2. Its pathway is cofactor biosynthesis; ubiquinone biosynthesis. Methyltransferase required for the conversion of demethylmenaquinol (DMKH2) to menaquinol (MKH2) and the conversion of 2-polyprenyl-6-methoxy-1,4-benzoquinol (DDMQH2) to 2-polyprenyl-3-methyl-6-methoxy-1,4-benzoquinol (DMQH2). The chain is Ubiquinone/menaquinone biosynthesis C-methyltransferase UbiE from Roseobacter denitrificans (strain ATCC 33942 / OCh 114) (Erythrobacter sp. (strain OCh 114)).